We begin with the raw amino-acid sequence, 941 residues long: Isoleucine--tRNA ligase (941 aa).

The 'HIGH' region signature appears at 58 to 68; that stretch reads PYANGDIHIGH. Glutamate 563 is a binding site for L-isoleucyl-5'-AMP. Positions 604–608 match the 'KMSKS' region motif; it reads KMSKS. An ATP-binding site is contributed by lysine 607. 4 residues coordinate Zn(2+): cysteine 904, cysteine 907, cysteine 924, and cysteine 927.

Belongs to the class-I aminoacyl-tRNA synthetase family. IleS type 1 subfamily. As to quaternary structure, monomer. Zn(2+) serves as cofactor.

The protein resides in the cytoplasm. The catalysed reaction is tRNA(Ile) + L-isoleucine + ATP = L-isoleucyl-tRNA(Ile) + AMP + diphosphate. Catalyzes the attachment of isoleucine to tRNA(Ile). As IleRS can inadvertently accommodate and process structurally similar amino acids such as valine, to avoid such errors it has two additional distinct tRNA(Ile)-dependent editing activities. One activity is designated as 'pretransfer' editing and involves the hydrolysis of activated Val-AMP. The other activity is designated 'posttransfer' editing and involves deacylation of mischarged Val-tRNA(Ile). The sequence is that of Isoleucine--tRNA ligase from Halorhodospira halophila (strain DSM 244 / SL1) (Ectothiorhodospira halophila (strain DSM 244 / SL1)).